A 348-amino-acid polypeptide reads, in one-letter code: Putative transport protein HI_0338 (348 aa).

9 helical membrane-spanning segments follow: residues leucine 7–alanine 27, alanine 28–isoleucine 48, leucine 60–isoleucine 80, valine 139–phenylalanine 159, valine 196–isoleucine 216, valine 223–glycine 243, isoleucine 245–phenylalanine 265, valine 267–methionine 287, and leucine 296–leucine 316.

It belongs to the autoinducer-2 exporter (AI-2E) (TC 2.A.86) family.

It localises to the cell membrane. The protein is Putative transport protein HI_0338 of Haemophilus influenzae (strain ATCC 51907 / DSM 11121 / KW20 / Rd).